The following is a 572-amino-acid chain: Proline--tRNA ligase (572 aa).

The protein belongs to the class-II aminoacyl-tRNA synthetase family. ProS type 1 subfamily. As to quaternary structure, homodimer.

It is found in the cytoplasm. It carries out the reaction tRNA(Pro) + L-proline + ATP = L-prolyl-tRNA(Pro) + AMP + diphosphate. Functionally, catalyzes the attachment of proline to tRNA(Pro) in a two-step reaction: proline is first activated by ATP to form Pro-AMP and then transferred to the acceptor end of tRNA(Pro). As ProRS can inadvertently accommodate and process non-cognate amino acids such as alanine and cysteine, to avoid such errors it has two additional distinct editing activities against alanine. One activity is designated as 'pretransfer' editing and involves the tRNA(Pro)-independent hydrolysis of activated Ala-AMP. The other activity is designated 'posttransfer' editing and involves deacylation of mischarged Ala-tRNA(Pro). The misacylated Cys-tRNA(Pro) is not edited by ProRS. The polypeptide is Proline--tRNA ligase (Leuconostoc mesenteroides subsp. mesenteroides (strain ATCC 8293 / DSM 20343 / BCRC 11652 / CCM 1803 / JCM 6124 / NCDO 523 / NBRC 100496 / NCIMB 8023 / NCTC 12954 / NRRL B-1118 / 37Y)).